We begin with the raw amino-acid sequence, 305 residues long: Aspartate carbamoyltransferase catalytic subunit (305 aa).

Carbamoyl phosphate contacts are provided by Arg56 and Thr57. Lys84 is a binding site for L-aspartate. Carbamoyl phosphate-binding residues include Arg106, His136, and Gln139. 2 residues coordinate L-aspartate: Arg169 and Arg221. Carbamoyl phosphate contacts are provided by Ala262 and Pro263.

Belongs to the aspartate/ornithine carbamoyltransferase superfamily. ATCase family. Heterododecamer (2C3:3R2) of six catalytic PyrB chains organized as two trimers (C3), and six regulatory PyrI chains organized as three dimers (R2).

The catalysed reaction is carbamoyl phosphate + L-aspartate = N-carbamoyl-L-aspartate + phosphate + H(+). It participates in pyrimidine metabolism; UMP biosynthesis via de novo pathway; (S)-dihydroorotate from bicarbonate: step 2/3. Functionally, catalyzes the condensation of carbamoyl phosphate and aspartate to form carbamoyl aspartate and inorganic phosphate, the committed step in the de novo pyrimidine nucleotide biosynthesis pathway. The polypeptide is Aspartate carbamoyltransferase catalytic subunit (Streptococcus sanguinis (strain SK36)).